Reading from the N-terminus, the 405-residue chain is Sesquiterpene synthase 16 (405 aa).

The Mg(2+) site is built by Asp155, Asp159, and Glu309. The DDXXD motif motif lies at 155 to 159 (DDTYD).

This sequence belongs to the terpene synthase family. Tpsa subfamily. Mg(2+) is required as a cofactor. The cofactor is Mn(2+).

It functions in the pathway secondary metabolite biosynthesis; terpenoid biosynthesis. In terms of biological role, sesquiterpene synthase involved in the biosynthesis of volatile compounds. No activity detected with geranyl diphosphate (GPP) and farnesyl diphosphate (FPP) as substrates. This Solanum habrochaites (Wild tomato) protein is Sesquiterpene synthase 16.